We begin with the raw amino-acid sequence, 427 residues long: 5'-deoxyadenosine deaminase (427 aa).

Residues H62 and H64 each contribute to the Zn(2+) site. The substrate site is built by E91 and H183. H210 serves as a coordination point for Zn(2+). Substrate-binding residues include E213 and D298. Position 298 (D298) interacts with Zn(2+).

It belongs to the metallo-dependent hydrolases superfamily. MTA/SAH deaminase family. As to quaternary structure, homotetramer. Zn(2+) serves as cofactor.

The enzyme catalyses 5'-deoxyadenosine + H2O + H(+) = 5'-deoxyinosine + NH4(+). It carries out the reaction S-adenosyl-L-homocysteine + H2O + H(+) = S-inosyl-L-homocysteine + NH4(+). The catalysed reaction is S-methyl-5'-thioadenosine + H2O + H(+) = S-methyl-5'-thioinosine + NH4(+). It catalyses the reaction adenosine + H2O + H(+) = inosine + NH4(+). It functions in the pathway amino-acid biosynthesis; S-adenosyl-L-methionine biosynthesis. Catalyzes the deamination of three SAM-derived enzymatic products, namely 5'-deoxyadenosine, S-adenosyl-L-homocysteine, and 5'-methylthioadenosine, to produce the inosine analogs. Can also deaminate adenosine. The preferred substrate for this enzyme is 5'-deoxyadenosine, but all these substrates are efficiently deaminated. Likely functions in a S-adenosyl-L-methionine (SAM) recycling pathway from S-adenosyl-L-homocysteine (SAH) produced from SAM-dependent methylation reactions. May also be involved in the recycling of 5'-deoxyadenosine, whereupon the 5'-deoxyribose moiety of 5'-deoxyinosine is further metabolized to deoxyhexoses used for the biosynthesis of aromatic amino acids in methanogens. This Methanothermobacter thermautotrophicus (strain ATCC 29096 / DSM 1053 / JCM 10044 / NBRC 100330 / Delta H) (Methanobacterium thermoautotrophicum) protein is 5'-deoxyadenosine deaminase.